Here is a 129-residue protein sequence, read N- to C-terminus: uncharacterized protein (129 aa).

Residues Met1–Pro13 are compositionally biased toward low complexity. Residues Met1 to Glu129 are disordered. Over residues Ile34–Ala94 the composition is skewed to basic and acidic residues. Residues Val117–Glu129 show a composition bias toward low complexity.

This is an uncharacterized protein from Caenorhabditis elegans.